Consider the following 681-residue polypeptide: U3 small nucleolar ribonucleoprotein protein MPP10 (681 aa).

Phosphoserine occurs at positions 61, 120, and 139. Residues 105-147 are compositionally biased toward acidic residues; that stretch reads SLLPESEEQEREEDGSEIEADDKEDLEDLEEEEVSDMGNDDPE. Disordered regions lie at residues 105-202 and 216-364; these read SLLP…IVDD and NIEK…EKRQ. Residues 109–138 adopt a coiled-coil conformation; sequence ESEEQEREEDGSEIEADDKEDLEDLEEEEV. Residues 148–162 show a composition bias toward basic and acidic residues; it reads MGERAENSSKSDLRK. Ser-163, Ser-167, and Ser-171 each carry phosphoserine. Positions 180–190 are enriched in polar residues; the sequence is LEQQSKVQNKG. 2 stretches are compositionally biased toward basic and acidic residues: residues 193–202 and 216–226; these read KPREKSIVDD and NIEKEEERKDD. Positions 205–239 form a coiled coil; sequence FKLSEMEAYLENIEKEEERKDDNDEEEEDIDFFED. The segment covering 227 to 247 has biased composition (acidic residues); it reads NDEEEEDIDFFEDIDSDEDEG. A Phosphoserine modification is found at Ser-242. The span at 253–264 shows a compositional bias: basic residues; the sequence is KKLKSGKSSRNL. Ser-275 and Ser-289 each carry phosphoserine. Over residues 280–290 the composition is skewed to basic and acidic residues; sequence TNVHDDELDSN. 2 coiled-coil regions span residues 284 to 324 and 348 to 382; these read DDEL…NKQH and NVKKNSDEVKSSFEKRQEKMNEKIASLEKELLEKK. The segment covering 291–318 has biased composition (acidic residues); the sequence is KEDDEIAEEEAEELSISETDEDDDLQEN. The segment covering 319 to 329 has biased composition (basic and acidic residues); that stretch reads EDNKQHKESLK. Lys-350 participates in a covalent cross-link: Glycyl lysine isopeptide (Lys-Gly) (interchain with G-Cter in SUMO2). Residues 351–364 show a composition bias toward basic and acidic residues; the sequence is KNSDEVKSSFEKRQ. Residues Lys-382 and Lys-394 each participate in a glycyl lysine isopeptide (Lys-Gly) (interchain with G-Cter in SUMO2) cross-link. Residues 469 to 490 are a coiled coil; sequence LAEIYEQEYIKLNQQKTAEEEN. Residue Lys-555 forms a Glycyl lysine isopeptide (Lys-Gly) (interchain with G-Cter in SUMO2) linkage. A compositionally biased stretch (basic and acidic residues) spans 558-575; the sequence is NKAGDIKTAAEKTATDKK. Residues 558 to 606 are disordered; sequence NKAGDIKTAAEKTATDKKRERRKKKYQKRMKIKEKEKRRKLLEKSSVDQ. Residues 574–604 adopt a coiled-coil conformation; it reads KKRERRKKKYQKRMKIKEKEKRRKLLEKSSV. Over residues 576–598 the composition is skewed to basic residues; that stretch reads RERRKKKYQKRMKIKEKEKRRKL. Lys-609 is subject to N6-acetyllysine. Glycyl lysine isopeptide (Lys-Gly) (interchain with G-Cter in SUMO2) cross-links involve residues Lys-632 and Lys-649. Positions 648–670 form a coiled coil; it reads SKLQDQVKMQINDAKKTEKKKKK. The tract at residues 660–681 is disordered; the sequence is DAKKTEKKKKKRQDISVHKLKL. A compositionally biased stretch (basic and acidic residues) spans 672–681; the sequence is QDISVHKLKL.

It belongs to the MPP10 family. In terms of assembly, part of the small subunit (SSU) processome, composed of more than 70 proteins and the RNA chaperone small nucleolar RNA (snoRNA) U3. Component of a heterotrimeric complex containing IMP3, IMP4 and MPHOSPH10. Interacts with IMP3 and IMP4. Phosphorylated in M (mitotic) phase.

It localises to the nucleus. Its subcellular location is the nucleolus. The protein resides in the chromosome. Functionally, component of the 60-80S U3 small nucleolar ribonucleoprotein (U3 snoRNP). Required for the early cleavages during pre-18S ribosomal RNA processing. Part of the small subunit (SSU) processome, first precursor of the small eukaryotic ribosomal subunit. During the assembly of the SSU processome in the nucleolus, many ribosome biogenesis factors, an RNA chaperone and ribosomal proteins associate with the nascent pre-rRNA and work in concert to generate RNA folding, modifications, rearrangements and cleavage as well as targeted degradation of pre-ribosomal RNA by the RNA exosome. The chain is U3 small nucleolar ribonucleoprotein protein MPP10 from Homo sapiens (Human).